A 92-amino-acid chain; its full sequence is Small ribosomal subunit protein bS20 (92 aa).

The tract at residues 1 to 25 is disordered; the sequence is MANSAQARKRARQAAKANSHNSALR.

It belongs to the bacterial ribosomal protein bS20 family.

In terms of biological role, binds directly to 16S ribosomal RNA. This is Small ribosomal subunit protein bS20 from Paraburkholderia phytofirmans (strain DSM 17436 / LMG 22146 / PsJN) (Burkholderia phytofirmans).